A 166-amino-acid chain; its full sequence is MAQTNSFFMLISSLMFLSLSQGQESQTELPNPRISCPEGTNAYRSYCYYFNEDPETWVDADLYCQNMNSGNLVSVLTQAEGAFVASLIKESSTDDSNVWIGLHDPKKNRRWHWSSGSLVSYKSWDTGSPSSANAGYCASLTSCSGFKKWKDESCEKKFSFVCKFKN.

The first 22 residues, 1–22 (MAQTNSFFMLISSLMFLSLSQG), serve as a signal peptide directing secretion. The O-linked (GalNAc...) threonine glycan is linked to Thr27. A C-type lectin domain is found at 34–164 (ISCPEGTNAY…EKKFSFVCKF (131 aa)). Disulfide bonds link Cys36–Cys47, Cys64–Cys162, and Cys137–Cys154.

Post-translationally, all O-linked glycans consist of Gal-GlcNAc-Gal-GalNAc tetrasaccharide core and get elongated (microheterogeneity).

Its subcellular location is the secreted. Its function is as follows. Might act as an inhibitor of spontaneous calcium carbonate precipitation. May be associated with neuronal sprouting in brain, and with brain and pancreas regeneration. The sequence is that of Lithostathine-1-beta (REG1B) from Homo sapiens (Human).